The sequence spans 127 residues: Fluoride-specific ion channel FluC (127 aa).

A run of 4 helical transmembrane segments spans residues 7 to 27 (VYVALGGALGAVSRYLIVAWV), 38 to 58 (GTLAVNLLGSFLLGTAFVYVV), 70 to 90 (LIMVGFLGALTTFSTFSLEAW), and 102 to 122 (LAYILMSVILCLFAVSAGIAL). Gly77 and Thr80 together coordinate Na(+).

The protein belongs to the fluoride channel Fluc/FEX (TC 1.A.43) family.

The protein localises to the cell inner membrane. The enzyme catalyses fluoride(in) = fluoride(out). With respect to regulation, na(+) is not transported, but it plays an essential structural role and its presence is essential for fluoride channel function. Its function is as follows. Fluoride-specific ion channel. Important for reducing fluoride concentration in the cell, thus reducing its toxicity. This Hahella chejuensis (strain KCTC 2396) protein is Fluoride-specific ion channel FluC.